We begin with the raw amino-acid sequence, 165 residues long: Endoribonuclease YbeY (165 aa).

Zn(2+)-binding residues include histidine 131, histidine 135, and histidine 141.

The protein belongs to the endoribonuclease YbeY family. Zn(2+) serves as cofactor.

It localises to the cytoplasm. In terms of biological role, single strand-specific metallo-endoribonuclease involved in late-stage 70S ribosome quality control and in maturation of the 3' terminus of the 16S rRNA. This Lachnoclostridium phytofermentans (strain ATCC 700394 / DSM 18823 / ISDg) (Clostridium phytofermentans) protein is Endoribonuclease YbeY.